Consider the following 650-residue polypeptide: Putative secretin GspD (650 aa).

An N-terminal signal peptide occupies residues 1–23 (MKGLNKITCCLLAALLMPCAGHA). The tract at residues 24–122 (ENEQYGANFN…IADSSRPGVG (99 aa)) is N0. An N1 region spans residues 124–188 (ELVTRIVPLE…EVIKRVDVIG (65 aa)). The tract at residues 189 to 263 (TEKQQIIHLE…LLKSLDVEES (75 aa)) is N2. Positions 266 to 342 (GNTRVYYLKY…KLATVIARLD (77 aa)) are N3. Positions 345 to 596 (RAQVLVEAII…VFIRPTIIRD (252 aa)) are secretin. The s domain stretch occupies residues 598–650 (DVYRSLSKEKYTRYRQEQQQRIDGKSKALVGSEDLPVLDENTFNSHAPAPSSR).

It belongs to the bacterial secretin family. GSP D subfamily. As to quaternary structure, forms a cylindrical channel with 15 subunits; approximately 25% of the particles have 16-subunit channels. Closed pentadeacameric channels are 180 Angstroms long and 145 Angstroms in diameter. Each subunit turns in a clock-wise manner around the channel.

Its subcellular location is the cell outer membrane. Its function is as follows. Involved in a type II secretion system (T2SS, formerly general secretion pathway, GSP) for the export of folded proteins across the outer membrane. This subunit would form the outer membrane channel. This chain is Putative secretin GspD (gspD), found in Escherichia coli (strain K12).